Here is a 505-residue protein sequence, read N- to C-terminus: Glutamyl-tRNA(Gln) amidotransferase subunit B, mitochondrial (505 aa).

Belongs to the GatB/GatE family. GatB subfamily. Subunit of the heterotrimeric GatCAB amidotransferase (AdT) complex, composed of A, B and C subunits.

The protein resides in the mitochondrion. It catalyses the reaction L-glutamyl-tRNA(Gln) + L-glutamine + ATP + H2O = L-glutaminyl-tRNA(Gln) + L-glutamate + ADP + phosphate + H(+). Its function is as follows. Allows the formation of correctly charged Gln-tRNA(Gln) through the transamidation of misacylated Glu-tRNA(Gln) in the mitochondria. The reaction takes place in the presence of glutamine and ATP through an activated gamma-phospho-Glu-tRNA(Gln). This chain is Glutamyl-tRNA(Gln) amidotransferase subunit B, mitochondrial, found in Schizosaccharomyces japonicus (strain yFS275 / FY16936) (Fission yeast).